The chain runs to 138 residues: Putative pre-16S rRNA nuclease (138 aa).

This sequence belongs to the YqgF nuclease family.

It is found in the cytoplasm. Functionally, could be a nuclease involved in processing of the 5'-end of pre-16S rRNA. This chain is Putative pre-16S rRNA nuclease, found in Shigella dysenteriae serotype 1 (strain Sd197).